The following is a 275-amino-acid chain: Adenylate kinase (275 aa).

Residue 54-59 (GAGKGT) coordinates ATP. Residues 74–103 (ATGDMLRSQVAKKTPLGREAKKIMDQGGLV) are NMP. Residues threonine 75, arginine 80, 101-103 (GLV), 130-133 (GFPR), and glutamine 137 each bind AMP. Residues 171–208 (GRLVHPASGRSYHRVFNPPKAEMKDDITGEPLVSRSDD) are LID. Residues arginine 172 and 181–182 (SY) contribute to the ATP site. 2 residues coordinate AMP: arginine 205 and arginine 216. Residue glutamine 244 participates in ATP binding.

This sequence belongs to the adenylate kinase family. AK2 subfamily. Monomer.

It localises to the cytoplasm. Its subcellular location is the cytosol. It is found in the mitochondrion intermembrane space. It catalyses the reaction AMP + ATP = 2 ADP. In terms of biological role, catalyzes the reversible transfer of the terminal phosphate group between ATP and AMP. Plays an important role in cellular energy homeostasis and in adenine nucleotide metabolism. Adenylate kinase activity is critical for regulation of the phosphate utilization and the AMP de novo biosynthesis pathways. In Sclerotinia sclerotiorum (strain ATCC 18683 / 1980 / Ss-1) (White mold), this protein is Adenylate kinase (adk1).